An 872-amino-acid polypeptide reads, in one-letter code: Alanine--tRNA ligase (872 aa).

Zn(2+) is bound by residues His-561, His-565, Cys-662, and His-666.

The protein belongs to the class-II aminoacyl-tRNA synthetase family. Zn(2+) serves as cofactor.

It localises to the cytoplasm. The enzyme catalyses tRNA(Ala) + L-alanine + ATP = L-alanyl-tRNA(Ala) + AMP + diphosphate. Functionally, catalyzes the attachment of alanine to tRNA(Ala) in a two-step reaction: alanine is first activated by ATP to form Ala-AMP and then transferred to the acceptor end of tRNA(Ala). Also edits incorrectly charged Ser-tRNA(Ala) and Gly-tRNA(Ala) via its editing domain. This chain is Alanine--tRNA ligase, found in Thiobacillus denitrificans (strain ATCC 25259 / T1).